A 215-amino-acid chain; its full sequence is Adenylate kinase (215 aa).

An ATP-binding site is contributed by 10 to 15 (GAGKGT). An NMP region spans residues 30-59 (STGDIFRDAVNQGSELGQEAQKYMSSGQLV). Residues Thr31, Arg36, 57–59 (QLV), 85–88 (GFPR), and Gln92 contribute to the AMP site. Positions 126–163 (GRISCRECKRVYNLNFNPPREQGKCDSCGGELVQRNDD) are LID. Arg127 provides a ligand contact to ATP. 2 residues coordinate Zn(2+): Cys130 and Cys133. 136 to 137 (VY) contacts ATP. Zn(2+) contacts are provided by Cys150 and Cys153. AMP contacts are provided by Arg160 and Arg171. Arg199 provides a ligand contact to ATP.

This sequence belongs to the adenylate kinase family. As to quaternary structure, monomer.

It localises to the cytoplasm. It carries out the reaction AMP + ATP = 2 ADP. The protein operates within purine metabolism; AMP biosynthesis via salvage pathway; AMP from ADP: step 1/1. In terms of biological role, catalyzes the reversible transfer of the terminal phosphate group between ATP and AMP. Plays an important role in cellular energy homeostasis and in adenine nucleotide metabolism. In Syntrophomonas wolfei subsp. wolfei (strain DSM 2245B / Goettingen), this protein is Adenylate kinase.